Reading from the N-terminus, the 459-residue chain is DNA primase large subunit (459 aa).

[4Fe-4S] cluster-binding residues include C291, C369, C386, and C428.

This sequence belongs to the eukaryotic-type primase large subunit family. In terms of assembly, heterodimer of a catalytic subunit spp1/pri1 and a regulatory subunit spp2/pri2, also known as the DNA primase complex. Component of the alpha DNA polymerase complex (also known as the alpha DNA polymerase-primase complex) consisting of four subunits: the catalytic subunit pol1, the accessory subunit spb70/pol12, and the primase complex subunits spp1/pri1 and spp2/pri2 respectively. Interacts with orc2; preferentially associates with the unphosphorylated orc2 in G1 pre-Start prior to orc2 being phosphorylated by cdc2, the interaction is mediated by spb70 and might enable the association of the whole alpha DNA polymerase complex to orc2/spb70 complex on chromatin. [4Fe-4S] cluster serves as cofactor.

The protein resides in the nucleus. It is found in the chromosome. Regulatory subunit of the DNA primase complex and component of the DNA polymerase alpha complex (also known as the alpha DNA polymerase-primase complex - primosome/replisome) which play an essential role in the initiation of DNA synthesis. During the S phase of the cell cycle, the DNA polymerase alpha complex (composed of a catalytic subunit pol1, an accessory subunit spb70/pol12 and two primase subunits, the catalytic subunit spp1/pri1 and the regulatory subunit spp2/pri2) is recruited to DNA at the replicative forks. The primase subunit of the polymerase alpha complex initiates DNA synthesis by oligomerising short RNA primers on both leading and lagging strands. The protein is DNA primase large subunit of Schizosaccharomyces pombe (strain 972 / ATCC 24843) (Fission yeast).